Consider the following 647-residue polypeptide: MYMIQLTFPDGAVKEFEAGVTAEDVAGSISPGLRKKAIAAKLDGELIDYRRPIEHDGKIELVMPDSEDGLDLMRHSSAHLMAQAIKRLYGEDNNIYLGIGPTIENGFYYDIEMDRRINEEDLPEIEKMMKRIVDENLEITREVVSRDEALARYKELGDPLKIELIEDIPADQTLTIYHQGEFFDLCRGPHVPSTSKLKIFKLMSVAGAYWRGDSDNKMLQRIYGTAWATKEQLAEHLRLLEEAKERDHRKLGKELDLFFVSQEVGQGLPMWLPKGASIRRTVERYIVDKELELGYQHVYTPVLGSVDLYKTSGHWDHYQDDMFPKMEMDNEELVLRPMNCPHHMTIYKHEPRSYRELPLRIAELGGMHRYEMSGALTGLQRVRYMVLNDGHTFVTPEQMKQEFKDIVHLIQEVYADFGIKDYRFRLSYRDPADKEKYFDNDAIWEMAQSQLKETMDELELPYFEAEGEAAFYGPKLDVQVRTALGKEETLSTVQLDFLLPERFDLTYTGPDGKDHRPIVLHRGVVSTMERFVAYLIEEYKGAFPTWLAPVQVKLIPVSHVHDEYVAEVKAELVKRGVRVETDLRDEKLGYKIREAQMKKIPMTLVLGDKERDERAVNIRRYGQQEQVSASLDEFIASLTDEIANRSR.

Residues 1–63 form the TGS domain; it reads MYMIQLTFPD…EHDGKIELVM (63 aa). The tract at residues 247–544 is catalytic; sequence DHRKLGKELD…LIEEYKGAFP (298 aa). The Zn(2+) site is built by Cys340, His391, and His521.

Belongs to the class-II aminoacyl-tRNA synthetase family. Homodimer. It depends on Zn(2+) as a cofactor.

Its subcellular location is the cytoplasm. The catalysed reaction is tRNA(Thr) + L-threonine + ATP = L-threonyl-tRNA(Thr) + AMP + diphosphate + H(+). Functionally, catalyzes the attachment of threonine to tRNA(Thr) in a two-step reaction: L-threonine is first activated by ATP to form Thr-AMP and then transferred to the acceptor end of tRNA(Thr). Also edits incorrectly charged L-seryl-tRNA(Thr). The sequence is that of Threonine--tRNA ligase from Exiguobacterium sp. (strain ATCC BAA-1283 / AT1b).